A 98-amino-acid chain; its full sequence is NADH-ubiquinone oxidoreductase chain 4L (98 aa).

3 helical membrane-spanning segments follow: residues 2–22 (PSIF…TLVF), 29–49 (SLLC…LIIL), and 61–81 (ILLL…LVMV).

Belongs to the complex I subunit 4L family. In terms of assembly, core subunit of respiratory chain NADH dehydrogenase (Complex I) which is composed of 45 different subunits.

Its subcellular location is the mitochondrion inner membrane. It carries out the reaction a ubiquinone + NADH + 5 H(+)(in) = a ubiquinol + NAD(+) + 4 H(+)(out). Its function is as follows. Core subunit of the mitochondrial membrane respiratory chain NADH dehydrogenase (Complex I) which catalyzes electron transfer from NADH through the respiratory chain, using ubiquinone as an electron acceptor. Part of the enzyme membrane arm which is embedded in the lipid bilayer and involved in proton translocation. The sequence is that of NADH-ubiquinone oxidoreductase chain 4L (MT-ND4L) from Propithecus tattersalli (Golden-crowned Sifaka).